The following is a 735-amino-acid chain: Ion-translocating oxidoreductase complex subunit C (735 aa).

4Fe-4S ferredoxin-type domains follow at residues Met-368–Tyr-397 and Lys-407–Phe-436. [4Fe-4S] cluster-binding residues include Cys-377, Cys-380, Cys-383, Cys-387, Cys-416, Cys-419, Cys-422, and Cys-426. Positions Gln-534 to Ala-715 are disordered. The span at Gln-666–Arg-689 shows a compositional bias: low complexity.

This sequence belongs to the 4Fe4S bacterial-type ferredoxin family. RnfC subfamily. In terms of assembly, the complex is composed of six subunits: RsxA, RsxB, RsxC, RsxD, RsxE and RsxG. The cofactor is [4Fe-4S] cluster.

The protein localises to the cell inner membrane. Its function is as follows. Part of a membrane-bound complex that couples electron transfer with translocation of ions across the membrane. Required to maintain the reduced state of SoxR. In Salmonella paratyphi B (strain ATCC BAA-1250 / SPB7), this protein is Ion-translocating oxidoreductase complex subunit C.